A 104-amino-acid chain; its full sequence is Urease subunit beta (104 aa).

The protein belongs to the urease beta subunit family. As to quaternary structure, heterotrimer of UreA (gamma), UreB (beta) and UreC (alpha) subunits. Three heterotrimers associate to form the active enzyme.

It is found in the cytoplasm. The catalysed reaction is urea + 2 H2O + H(+) = hydrogencarbonate + 2 NH4(+). It functions in the pathway nitrogen metabolism; urea degradation; CO(2) and NH(3) from urea (urease route): step 1/1. The chain is Urease subunit beta from Rhodococcus opacus (strain B4).